Reading from the N-terminus, the 346-residue chain is Biotin synthase (346 aa).

In terms of domain architecture, Radical SAM core spans 38–256 (RQVQVSTLLS…IAVARIMMPT (219 aa)). [4Fe-4S] cluster-binding residues include C53, C57, and C60. The [2Fe-2S] cluster site is built by C97, C128, C188, and R260.

It belongs to the radical SAM superfamily. Biotin synthase family. As to quaternary structure, homodimer. It depends on [4Fe-4S] cluster as a cofactor. [2Fe-2S] cluster serves as cofactor.

The enzyme catalyses (4R,5S)-dethiobiotin + (sulfur carrier)-SH + 2 reduced [2Fe-2S]-[ferredoxin] + 2 S-adenosyl-L-methionine = (sulfur carrier)-H + biotin + 2 5'-deoxyadenosine + 2 L-methionine + 2 oxidized [2Fe-2S]-[ferredoxin]. Its pathway is cofactor biosynthesis; biotin biosynthesis; biotin from 7,8-diaminononanoate: step 2/2. Its function is as follows. Catalyzes the conversion of dethiobiotin (DTB) to biotin by the insertion of a sulfur atom into dethiobiotin via a radical-based mechanism. This chain is Biotin synthase, found in Escherichia coli O6:K15:H31 (strain 536 / UPEC).